The chain runs to 314 residues: Versiconal hemiacetal acetate esterase (314 aa).

Positions 85–87 match the Involved in the stabilization of the negatively charged intermediate by the formation of the oxyanion hole motif; the sequence is HGG. Residues Ser154, Asp255, and His285 contribute to the active site.

This sequence belongs to the 'GDXG' lipolytic enzyme family.

The catalysed reaction is (2S,3S)-versiconal hemiacetal acetate + H2O = (2S-3S)-versiconal hemiacetal + acetate + H(+). It catalyses the reaction (3S)-versiconol acetate + H2O = (S)-versiconol + acetate + H(+). Its pathway is mycotoxin biosynthesis; aflatoxin biosynthesis. Its function is as follows. Versiconal hemiacetal acetate esterase; part of the gene cluster that mediates the biosynthesis of aflatoxins, a group of polyketide-derived furanocoumarins, and part of the most toxic and carcinogenic compounds among the known mycotoxins. The four major aflatoxins produced by A.parasiticus are aflatoxin B1 (AFB1), aflatoxin B2 (AFB2), aflatoxin G1 (AFG1) and aflatoxin G2 (AFG2). Within the aflatoxin pathway, the versiconal hemiacetal acetate esterase aflJ converts versiconal hemiacetal acetate (VHA) into versiconal (VAL). The biosynthesis of aflatoxins begins with the norsolorinic acid synthase aflC that combines a hexanoyl starter unit produced by the fatty acid synthase aflA/aflB and 7 malonyl-CoA extender units to synthesize the precursor NOR. The second step is the conversion of NOR to averantin and requires the norsolorinic acid ketoreductase aflD, which catalyzes the dehydration of norsolorinic acid to form (1'S)-averantin. The norsolorinic acid reductases aflE and aflF may also play a role in the conversion of NOR to AVN. The cytochrome P450 monooxygenase aflG then catalyzes the hydroxylation of AVN to 5'hydroxyaverantin (HAVN). The next step is performed by the 5'-hydroxyaverantin dehydrogenase aflH that transforms HAVN to 5'-oxoaverantin (OAVN) which is further converted to averufin (AVF) by aflK that plays a dual role in the pathway, as a 5'-oxoaverantin cyclase that mediates conversion of 5'-oxoaverantin, as well as a versicolorin B synthase in a later step in the pathway. The averufin oxidase aflI catalyzes the conversion of AVF to versiconal hemiacetal acetate (VHA). VHA is then the substrate for the versiconal hemiacetal acetate esterase aflJ to yield versiconal (VAL). Versicolorin B synthase aflK then converts VAL to versicolorin B (VERB) by closing the bisfuran ring of aflatoxin which is required for DNA-binding, thus giving to aflatoxin its activity as a mutagen. Then, the activity of the versicolorin B desaturase aflL leads to versicolorin A (VERA). A branch point starts from VERB since it can also be converted to dihydrodemethylsterigmatocystin (DMDHST), probably also by aflL, VERA being a precursor for aflatoxins B1 and G1, and DMDHST for aflatoxins B2 and G2. Next, the versicolorin reductase aflM and the cytochrome P450 monooxygenase aflN are involved in conversion of VERA to demethylsterigmatocystin (DMST). AflX and aflY seem also involved in this step, through probable aflX-mediated epoxide ring-opening step following versicolorin A oxidation and aflY-mediated Baeyer-Villiger oxidation required for the formation of the xanthone ring. The methyltransferase aflO then leads to the modification of DMST to sterigmatocystin (ST), and of DMDHST to dihydrosterigmatocystin (DHST). Both ST and DHST are then substrates of the O-methyltransferase aflP to yield O-methylsterigmatocystin (OMST) and dihydro-O-methylsterigmatocystin (DHOMST), respectively. Finally OMST is converted to aflatoxins B1 and G1, and DHOMST to aflatoxins B2 and G2, via the action of several enzymes including O-methylsterigmatocystin oxidoreductase aflQ, the cytochrome P450 monooxygenase aflU, but also the NADH-dependent flavin oxidoreductase nadA which is specifically required for the synthesis of AFG1. The chain is Versiconal hemiacetal acetate esterase from Aspergillus parasiticus (strain ATCC 56775 / NRRL 5862 / SRRC 143 / SU-1).